The primary structure comprises 155 residues: UPF0260 protein Smed_0627 (155 aa).

Belongs to the UPF0260 family.

This chain is UPF0260 protein Smed_0627, found in Sinorhizobium medicae (strain WSM419) (Ensifer medicae).